The primary structure comprises 1187 residues: Roquin-2 (1187 aa).

The Zn(2+) site is built by C14, C17, C33, H35, C38, C50, and D53. Residues 14–54 (CPICYNEFDENVHKPISLGCSHTVCKTCLNKLHRKACPFDQ) form an RING-type; degenerate zinc finger. The interval 91-170 (ENKHYEVAKK…RTVTELILQH (80 aa)) is HEPN-N. Residues 171–325 (QNPQQLSANL…SIIDKLQSPE (155 aa)) are ROQ. The HEPN-C stretch occupies residues 326–396 (SFAKSVQELT…GLVDFIQNYS (71 aa)). The segment at 410-438 (KYKTSMCRDLRQQGGCPRGTNCTFAHSQE) adopts a C3H1-type zinc-finger fold. 2 disordered regions span residues 527-571 (VGTN…GTEL) and 640-677 (NVPE…PPPQ). The segment covering 529–545 (TNAQNAGPSAESVSENK) has biased composition (polar residues). At S548 the chain carries Phosphoserine. Residues 553 to 571 (PVSNAAATSAGPSNFGTEL) are compositionally biased toward polar residues. Phosphoserine is present on residues S806, S981, and S1115.

Interacts with EDC4. Interacts with CCR4-NOT deadenylase complex. Interacts with MAP3K5; the interaction is probably stimulus-dependent. In terms of processing, proteolytically cleaved by MALT1 in activated CD4(+) T cells; cleavage at Arg-509 is critical for promoting RC3H1 degradation in response to T-cell receptor (TCR) stimulation, and hence is necessary for prolonging the stability of a set of mRNAs controlling Th17 cell differentiation. In terms of tissue distribution, highest levels in lymph node and thymus and slightly lesser amounts in brain, lung, and spleen (at protein level). Very weak expression in heart, muscle, and kidney (at protein level). Expressed in CD4(+) helper T-cells (at protein level).

It localises to the cytoplasm. Its subcellular location is the P-body. It carries out the reaction S-ubiquitinyl-[E2 ubiquitin-conjugating enzyme]-L-cysteine + [acceptor protein]-L-lysine = [E2 ubiquitin-conjugating enzyme]-L-cysteine + N(6)-ubiquitinyl-[acceptor protein]-L-lysine.. Its pathway is protein modification; protein ubiquitination. Its activity is regulated as follows. Binding to dsRNA, but not CDE RNA, crosstalks with the E3 ubiquitin ligase activity and may inhibit ubiquitination. Functionally, post-transcriptional repressor of mRNAs containing a conserved stem loop motif, called constitutive decay element (CDE), which is often located in the 3'-UTR, as in HMGXB3, ICOS, IER3, NFKBID, NFKBIZ, PPP1R10, TNF and in many more mRNAs. Binds to CDE and promotes mRNA deadenylation and degradation. This process does not involve miRNAs. In follicular helper T (Tfh) cells, represses of ICOS and TNFRSF4 expression, thus preventing spontaneous Tfh cell differentiation, germinal center B-cell differentiation in the absence of immunization and autoimmunity. In resting or LPS-stimulated macrophages, controls inflammation by suppressing TNF expression. Also recognizes CDE in its own mRNA and in that of paralogous RC3H1, possibly leading to feedback loop regulation. Inhibits cooperatively with ZC3H12A the differentiation of helper T cells Th17 in lungs. They repress target mRNA encoding the Th17 cell-promoting factors IL6, ICOS, REL, IRF4, NFKBID and NFKBIZ. The cooperation requires RNA-binding by RC3H1 and the nuclease activity of ZC3H12A. miRNA-binding protein that regulates microRNA homeostasis. Enhances DICER-mediated processing of pre-MIR146a but reduces mature MIR146a levels through an increase of 3' end uridylation. Both inhibits ICOS mRNA expression and they may act together to exert the suppression. Acts as a ubiquitin E3 ligase. Pairs with E2 enzymes UBE2B, UBE2D2, UBE2E2, UBE2E3, UBE2G2, UBE2K and UBE2Q2 and produces polyubiquitin chains. Shows the strongest activity when paired with UBE2N:UBE2V1 or UBE2N:UBE2V2 E2 complexes and generate both short and long polyubiquitin chains. Involved in the ubiquitination of MAP3K5. Able to interact with double-stranded RNA (dsRNA). The chain is Roquin-2 (Rc3h2) from Mus musculus (Mouse).